We begin with the raw amino-acid sequence, 376 residues long: Queuine tRNA-ribosyltransferase accessory subunit 2 (376 aa).

Residues Cys323, Cys325, Cys328, and His354 each coordinate Zn(2+).

Belongs to the queuine tRNA-ribosyltransferase family. QTRT2 subfamily. In terms of assembly, heterodimer of a catalytic subunit and an accessory subunit. Requires Zn(2+) as cofactor.

The protein resides in the cytoplasm. Its function is as follows. Non-catalytic subunit of the queuine tRNA-ribosyltransferase (TGT) that catalyzes the base-exchange of a guanine (G) residue with queuine (Q) at position 34 (anticodon wobble position) in tRNAs with GU(N) anticodons (tRNA-Asp, -Asn, -His and -Tyr), resulting in the hypermodified nucleoside queuosine (7-(((4,5-cis-dihydroxy-2-cyclopenten-1-yl)amino)methyl)-7-deazaguanosine). The protein is Queuine tRNA-ribosyltransferase accessory subunit 2 of Caenorhabditis briggsae.